The primary structure comprises 255 residues: uncharacterized protein (255 aa).

This is an uncharacterized protein from Paracoccus denitrificans.